Here is a 138-residue protein sequence, read N- to C-terminus: Acidic phospholipase A2 1 (138 aa).

A signal peptide spans 1–16; that stretch reads MRTLWIMAVLLVGVDG. Cystine bridges form between cysteine 42-cysteine 131, cysteine 44-cysteine 60, cysteine 59-cysteine 110, cysteine 65-cysteine 138, cysteine 66-cysteine 103, cysteine 73-cysteine 97, and cysteine 91-cysteine 101. Positions 43, 45, and 47 each coordinate Ca(2+). Histidine 63 is a catalytic residue. Aspartate 64 contributes to the Ca(2+) binding site. Residue aspartate 104 is part of the active site.

Belongs to the phospholipase A2 family. Group II subfamily. D49 sub-subfamily. As to quaternary structure, homodimer. Requires Ca(2+) as cofactor. Expressed by the venom gland.

It is found in the secreted. The catalysed reaction is a 1,2-diacyl-sn-glycero-3-phosphocholine + H2O = a 1-acyl-sn-glycero-3-phosphocholine + a fatty acid + H(+). Its function is as follows. Snake venom phospholipase A2 (PLA2) that is highly lipolytic and myolytic. PLA2 catalyzes the calcium-dependent hydrolysis of the 2-acyl groups in 3-sn-phosphoglycerides. This chain is Acidic phospholipase A2 1, found in Protobothrops flavoviridis (Habu).